The primary structure comprises 297 residues: MGRGLLGGLWPLHVVLWTRIASTIPPHVPKSVNSDMMVTDSNGAVKLPQLCKFCDVRSSTCDNQKSCLSNCSITAICEKPQEVCVAVWRKNDENITIETVCDDPKIAYHGFVLDDAASSKCIMKERKGSGETFFMCSCSSDECNDHIIFSEEYATNNPDLLLVIFQVTGVSLLPPLGIAIAVIITFYCYRVHRQQKLSPSWDSGKPRKLMEFSEHLAIILEDDRSDISSTCANNINHNTELLPIELDTLVGKGRFAEVYKAKLRQNTSEQFETVAVKIFPYEEYASWKTEKDIFSDL.

A signal peptide spans M1–T23. The Extracellular portion of the chain corresponds to I24–Q166. 6 cysteine pairs are disulfide-bonded: C51–C84, C54–C71, C61–C67, C77–C101, C121–C136, and C138–C143. N70 and N94 each carry an N-linked (GlcNAc...) asparagine glycan. The chain crosses the membrane as a helical span at residues V167–Y187. Residues C188 to L297 are Cytoplasmic-facing. Residues I244–L297 enclose the Protein kinase domain. ATP is bound by residues V250–V258 and K277.

It belongs to the protein kinase superfamily. TKL Ser/Thr protein kinase family. TGFB receptor subfamily. In terms of assembly, homodimer. Heterohexamer; TGFB1, TGFB2 and TGFB3 homodimeric ligands assemble a functional receptor composed of two TGFBR1 and TGFBR2 heterodimers to form a ligand-receptor heterohexamer. The respective affinity of TGFRB1 and TGFRB2 for the ligands may modulate the kinetics of assembly of the receptor and may explain the different biological activities of TGFB1, TGFB2 and TGFB3. Component of a complex composed of TSC22D1 (via N-terminus), TGFBR1 and TGFBR2; the interaction between TSC22D1 and TGFBR1 is inhibited by SMAD7 and promoted by TGFB1. Interacts with DAXX. Interacts with DYNLT4. Interacts with ZFYVE9; ZFYVE9 recruits SMAD2 and SMAD3 to the TGF-beta receptor. Interacts with and is activated by SCUBE3; this interaction does not affect TGFB1-binding to TGFBR2. Interacts with VPS39; this interaction is independent of the receptor kinase activity and of the presence of TGF-beta. Interacts with CLU. It depends on Mg(2+) as a cofactor. Mn(2+) serves as cofactor. Phosphorylated on a Ser/Thr residue in the cytoplasmic domain.

The protein resides in the cell membrane. The protein localises to the membrane raft. It carries out the reaction L-threonyl-[receptor-protein] + ATP = O-phospho-L-threonyl-[receptor-protein] + ADP + H(+). It catalyses the reaction L-seryl-[receptor-protein] + ATP = O-phospho-L-seryl-[receptor-protein] + ADP + H(+). Functionally, transmembrane serine/threonine kinase forming with the TGF-beta type I serine/threonine kinase receptor, TGFBR1, the non-promiscuous receptor for the TGF-beta cytokines TGFB1, TGFB2 and TGFB3. Transduces the TGFB1, TGFB2 and TGFB3 signal from the cell surface to the cytoplasm and is thus regulating a plethora of physiological and pathological processes including cell cycle arrest in epithelial and hematopoietic cells, control of mesenchymal cell proliferation and differentiation, wound healing, extracellular matrix production, immunosuppression and carcinogenesis. The formation of the receptor complex composed of 2 TGFBR1 and 2 TGFBR2 molecules symmetrically bound to the cytokine dimer results in the phosphorylation and the activation of TGFRB1 by the constitutively active TGFBR2. Activated TGFBR1 phosphorylates SMAD2 which dissociates from the receptor and interacts with SMAD4. The SMAD2-SMAD4 complex is subsequently translocated to the nucleus where it modulates the transcription of the TGF-beta-regulated genes. This constitutes the canonical SMAD-dependent TGF-beta signaling cascade. Also involved in non-canonical, SMAD-independent TGF-beta signaling pathways. The protein is TGF-beta receptor type-2 (TGFBR2) of Sus scrofa (Pig).